The primary structure comprises 142 residues: Movement protein (142 aa).

The disordered stretch occupies residues 1-142; it reads MDLPEDQARF…LDRSESLSRY (142 aa). Polar residues-rich tracts occupy residues 9–22 and 33–43; these read RFTN…TSME and LYQSASRSQMA. The segment covering 50–62 has biased composition (low complexity); it reads SIISRTSSWRTSP. 2 stretches are compositionally biased toward polar residues: residues 74 to 95 and 113 to 124; these read MNSI…SASP and TTLQRTNSGFST. The span at 125–142 shows a compositional bias: basic and acidic residues; it reads KETEMPRLLDRSESLSRY.

Belongs to the luteoviruses movement protein family.

Functionally, transports viral genome to neighboring plant cells directly through plasmosdesmata, without any budding. The movement protein allows efficient cell to cell propagation, by bypassing the host cell wall barrier. In Cicer arietinum (Chickpea), this protein is Movement protein.